A 152-amino-acid chain; its full sequence is Large ribosomal subunit protein uL13 (152 aa).

The disordered stretch occupies residues 129-152 (EHPHEAQSPEVLDVKSMNKKNTRS).

This sequence belongs to the universal ribosomal protein uL13 family. Part of the 50S ribosomal subunit.

In terms of biological role, this protein is one of the early assembly proteins of the 50S ribosomal subunit, although it is not seen to bind rRNA by itself. It is important during the early stages of 50S assembly. In Ruegeria sp. (strain TM1040) (Silicibacter sp.), this protein is Large ribosomal subunit protein uL13.